Here is a 224-residue protein sequence, read N- to C-terminus: LexA repressor (224 aa).

Positions 31–51 (RAEIAAEFGFKSANAAEEHLQ) form a DNA-binding region, H-T-H motif. Residues Ser142 and Lys179 each act as for autocatalytic cleavage activity in the active site.

The protein belongs to the peptidase S24 family. Homodimer.

The catalysed reaction is Hydrolysis of Ala-|-Gly bond in repressor LexA.. Functionally, represses a number of genes involved in the response to DNA damage (SOS response), including recA and lexA. In the presence of single-stranded DNA, RecA interacts with LexA causing an autocatalytic cleavage which disrupts the DNA-binding part of LexA, leading to derepression of the SOS regulon and eventually DNA repair. This chain is LexA repressor, found in Paracidovorax citrulli (strain AAC00-1) (Acidovorax citrulli).